Here is an 818-residue protein sequence, read N- to C-terminus: Sodium/hydrogen exchanger 1 (818 aa).

At 1–98 (MLLWPGASGL…FPVLGIDYQH (98 aa)) the chain is on the extracellular side. Residues 44–76 (STIRGSEPPRERSIGDVTTAPPELAPESRPVNH) are disordered. Residue N75 is glycosylated (N-linked (GlcNAc...) asparagine). The chain crosses the membrane as a helical span at residues 99 to 121 (VRIPFEIALWILLACLMKIGFHV). The Cytoplasmic portion of the chain corresponds to 122-130 (IPTISSIVP). Residues 131 to 148 (ESCLLIVVGLLVGGLIKG) traverse the membrane as a helical segment. Residues 149–158 (VGETPPILQS) are Extracellular-facing. Residues 159–176 (EVFFLFLLPPIILDAGYF) traverse the membrane as a helical segment. Topologically, residues 177 to 186 (LPLRQFTENL) are cytoplasmic. The helical transmembrane segment at 187-215 (GTILIFAVVGTLWNAFFLGGLMYAVCLVG) threads the bilayer. The Extracellular portion of the chain corresponds to 216–222 (GEQINNI). The helical transmembrane segment at 223–249 (GLLENLLFGSIISAVDPVAVLAVFEEI) threads the bilayer. The Cytoplasmic segment spans residues 250–252 (HIN). Residues 253–283 (ELLHILVFGESLLNDAVTVVLYHLFEEFANY) traverse the membrane as a helical segment. Topologically, residues 284 to 287 (DRVG) are extracellular. Residues 288–322 (IVDIILGFLSFFVVSLGGVFVGVVYGVIAAFTSRF) traverse the membrane as a helical segment. Residues 323-328 (TSHIRV) are Cytoplasmic-facing. A helical membrane pass occupies residues 329–341 (IEPLFVFLYSYMA). The Extracellular segment spans residues 342–350 (YLSAELFHL). A helical transmembrane segment spans residues 351 to 371 (SGIMALIASGVVMRPYVEANI). At 372 to 373 (SH) the chain is on the cytoplasmic side. A helical transmembrane segment spans residues 374-404 (KSHTTIKYFLKMWSSVSETLIFIFLGVSTVA). The Extracellular segment spans residues 405–410 (GSHHWN). A helical transmembrane segment spans residues 411–438 (WTFVISTLLFCLIARVLGVLGLTWFINK). Topologically, residues 439 to 444 (FRIVKL) are cytoplasmic. The helical transmembrane segment at 445–469 (TPKDQFIIAYGGLRGAIAFSLGYLL) threads the bilayer. Topologically, residues 470 to 475 (DKKHFP) are extracellular. The chain crosses the membrane as a helical span at residues 476 to 505 (MCDLFLTAIITVIFFTVFVQGMTIRPLVDL). The interaction with TESC stretch occupies residues 503-545 (VDLLAVKKKQETKRSINEEIHTQFLDHLLTGIEDICGHYGHHH). The Cytoplasmic segment spans residues 506–818 (LAVKKKQETK…EGEPFIPKGQ (313 aa)). The segment at 509–516 (KKKQETKR) is PI(4,5)P2-binding region. The interval 515-545 (KRSINEEIHTQFLDHLLTGIEDICGHYGHHH) is interaction with CHP2. The tract at residues 540–545 (HYGHHH) is confers pH-dependent PI(4,5)P2 binding. The PI(4,5)P2-binding region stretch occupies residues 552–560 (RFNKKYVKK). Phosphoserine is present on residues S599 and S602. T603 carries the post-translational modification Phosphothreonine. Phosphoserine is present on residues S605 and S648. The interval 633–818 (KILRNNLQKT…EGEPFIPKGQ (186 aa)) is interaction with TESC. The segment at 633–818 (KILRNNLQKT…EGEPFIPKGQ (186 aa)) is interaction with CALM1. The interaction with PPP3CA stretch occupies residues 684-687 (LTVP). Residues S693, S697, and S703 each carry the phosphoserine modification. The interaction with PPP3CA stretch occupies residues 715 to 720 (PVITID). Phosphoserine occurs at positions 723, 726, and 729. A disordered region spans residues 741-818 (VLGLSRDPGR…EGEPFIPKGQ (78 aa)). A Phosphothreonine modification is found at T782. Polar residues predominate over residues 785-794 (PSDSPSSQRI). S788, S790, and S799 each carry phosphoserine.

The protein belongs to the monovalent cation:proton antiporter 1 (CPA1) transporter (TC 2.A.36) family. As to quaternary structure, homodimer; dimerization is crucial for its function. Oligomer. Interacts with CALM in a calcium-dependent manner. Interacts with TESC. Interacts (via the juxtamembrane region of the cytoplasmic C-terminal domain) with CHP1; the interaction occurs at the plasma membrane in a calcium-dependent manner. Interacts with CHP2; the interaction occurs in a calcium-dependent manner. Interacts with EZR; regulates the cytoskeletal interactions of SLC9A1 and promotes stress fiber formation. Ubiquitinated, leading to its degradation by the proteasome. Ubiquitination is reduced by CHP1. Post-translationally, O-glycosylated. In terms of processing, palmitoylated; may play a major role in SLC9A1 regulation. Phosphorylation at Thr-782 increases SLC9A1 activity. Specifically dephosphorylated at Thr-782 by PPP3CA that negatively regulates SLC9A1 activity. Phosphorylation at Ser-648 by AKT1 reduces SLC9A1 binding to CALM1.

It is found in the cell membrane. The protein localises to the basolateral cell membrane. The enzyme catalyses Na(+)(in) + H(+)(out) = Na(+)(out) + H(+)(in). The catalysed reaction is Li(+)(out) + H(+)(in) = Li(+)(in) + H(+)(out). It carries out the reaction Li(+)(in) + Na(+)(out) = Li(+)(out) + Na(+)(in). With respect to regulation, activated at acidic pHs. Inhibited by amiloride and 5-amino-substituted derivatives. Inhibited by cariporide and eniporide. Phosphatidylinositol 4,5-bisphosphate (PI(4,5)P2) and phosphatidylinositol 3,4,5-trisphosphate (PI(3,4,5)P3) bind and differentially regulate SLC9A1 activity. In terms of biological role, electroneutral Na(+) /H(+) antiporter that extrudes Na(+) in exchange for external protons driven by the inward sodium ion chemical gradient, protecting cells from acidification that occurs from metabolism. Exchanges intracellular H(+) ions for extracellular Na(+) in 1:1 stoichiometry. Plays a key role in maintening intracellular pH neutral and cell volume, and thus is important for cell growth, proliferation, migration and survival. In addition, can transport lithium Li(+) and also functions as a Na(+)/Li(+) antiporter. SLC9A1 also functions in membrane anchoring and organization of scaffolding complexes that coordinate signaling inputs. The protein is Sodium/hydrogen exchanger 1 (SLC9A1) of Bos taurus (Bovine).